Reading from the N-terminus, the 312-residue chain is Taste receptor type 2 member 7 (312 aa).

Residues 1–9 are Extracellular-facing; sequence MTYETDTTL. The chain crosses the membrane as a helical span at residues 10–30; that stretch reads MLVAVGEALVGILGNAFIALV. Residues 31–49 are Cytoplasmic-facing; it reads NFMGWMKNRKIASIDLILS. A helical transmembrane segment spans residues 50–70; sequence SVAMSRICLQCIILLDCIILV. Residues 71–101 lie on the Extracellular side of the membrane; it reads QYPDTYNRGKEMRTVDFFWTLTNHLSVWFAT. Residues 102–122 form a helical membrane-spanning segment; sequence CLSIFYLFKIANFFHPLFLWI. Residues 123-128 lie on the Cytoplasmic side of the membrane; that stretch reads KWRIDK. A helical transmembrane segment spans residues 129-149; sequence LILRTLLACVIISLCFSLPVT. Residues 150 to 187 are Extracellular-facing; sequence ENLSDDFRRCVKTKERINSTLRCKVNKAGHASVKVNLN. N-linked (GlcNAc...) asparagine glycosylation is found at asparagine 151 and asparagine 167. Residues 188–208 form a helical membrane-spanning segment; it reads LVMLFPFSVSLVSFLLLILSL. Residues 209-235 are Cytoplasmic-facing; that stretch reads WRHTRQIQLSVTGYKDPSTTAHVKAMK. Residues 236–256 form a helical membrane-spanning segment; that stretch reads AVISFLALFVVYCLAFLIATS. The Extracellular portion of the chain corresponds to 257 to 266; it reads SYFMPESELA. A helical membrane pass occupies residues 267 to 287; the sequence is VIWGELIALIYPSSHSFILIL. Topologically, residues 288–312 are cytoplasmic; it reads GSSKLKQASVRVLCRVKTMLKGKKY.

The protein belongs to the G-protein coupled receptor T2R family. Expressed in subsets of taste receptor cells of the tongue and palate epithelium and exclusively in gustducin-positive cells. Expressed in 15% taste bud cells in circumvallate and foliate papillae but only in 2% in fungiform papillae. Expressed in gastric and duodenal tissues.

It is found in the membrane. In terms of biological role, gustducin-coupled receptor implicated in the perception of bitter compounds in the oral cavity and the gastrointestinal tract. Signals through PLCB2 and the calcium-regulated cation channel TRPM5. This chain is Taste receptor type 2 member 7 (Tas2r7), found in Mus musculus (Mouse).